Consider the following 339-residue polypeptide: DNA-directed RNA polymerase subunit alpha (339 aa).

Residues 1–235 are alpha N-terminal domain (alpha-NTD); sequence MTIQKNWQEL…DQLNVFVNFE (235 aa). Positions 251–339 are alpha C-terminal domain (alpha-CTD); sequence FNPAFLKKVD…ELAKRFEDHY (89 aa).

Belongs to the RNA polymerase alpha chain family. Homodimer. The RNAP catalytic core consists of 2 alpha, 1 beta, 1 beta' and 1 omega subunit. When a sigma factor is associated with the core the holoenzyme is formed, which can initiate transcription.

It carries out the reaction RNA(n) + a ribonucleoside 5'-triphosphate = RNA(n+1) + diphosphate. In terms of biological role, DNA-dependent RNA polymerase catalyzes the transcription of DNA into RNA using the four ribonucleoside triphosphates as substrates. The polypeptide is DNA-directed RNA polymerase subunit alpha (Rhodopseudomonas palustris (strain BisB5)).